The following is a 246-amino-acid chain: Phosphomannomutase (246 aa).

The active-site Nucleophile is Asp-13. Positions 13 and 15 each coordinate Mg(2+). Asp-15 acts as the Proton donor/acceptor in catalysis. Arg-22, Arg-124, Arg-135, Arg-142, Ser-180, and Asp-182 together coordinate alpha-D-mannose 1-phosphate. Asp-208, Tyr-220, and Thr-225 together coordinate Mg(2+).

It belongs to the eukaryotic PMM family. In terms of assembly, homodimer. It depends on Mg(2+) as a cofactor. Expressed in roots, stems, leaves, flowers and immature fruits.

It localises to the cytoplasm. It catalyses the reaction alpha-D-mannose 1-phosphate = D-mannose 6-phosphate. Its pathway is nucleotide-sugar biosynthesis; GDP-alpha-D-mannose biosynthesis; alpha-D-mannose 1-phosphate from D-fructose 6-phosphate: step 2/2. Functionally, catalyzes the interconversion of mannose-6-phosphate to mannose-1-phosphate, the precursor for the synthesis of GDP-mannose. GDP-mannose is an essential sugar nucleotide for the synthesis of D-mannose-containing cell wall polysaccharides (galactomannans and glucomannans), glycolipids, glycoproteins and the antioxidant L-ascorbate. Can complement the yeast temperature-sensitive mutant sec53-6. The polypeptide is Phosphomannomutase (Arabidopsis thaliana (Mouse-ear cress)).